Here is a 198-residue protein sequence, read N- to C-terminus: Recombination protein RecR (198 aa).

A C4-type zinc finger spans residues Cys57–Cys72. The Toprim domain maps to Ser80–Pro175.

This sequence belongs to the RecR family.

In terms of biological role, may play a role in DNA repair. It seems to be involved in an RecBC-independent recombinational process of DNA repair. It may act with RecF and RecO. This Methylococcus capsulatus (strain ATCC 33009 / NCIMB 11132 / Bath) protein is Recombination protein RecR.